Reading from the N-terminus, the 445-residue chain is Trigger factor (445 aa).

The 86-residue stretch at 162-247 folds into the PPIase FKBP-type domain; that stretch reads GDQITMDAVG…VKAVHTAEPT (86 aa).

This sequence belongs to the FKBP-type PPIase family. Tig subfamily.

It localises to the cytoplasm. It carries out the reaction [protein]-peptidylproline (omega=180) = [protein]-peptidylproline (omega=0). In terms of biological role, involved in protein export. Acts as a chaperone by maintaining the newly synthesized protein in an open conformation. Functions as a peptidyl-prolyl cis-trans isomerase. This chain is Trigger factor, found in Rickettsia bellii (strain OSU 85-389).